The primary structure comprises 825 residues: Phenylalanine--tRNA ligase beta subunit (825 aa).

The region spanning 39–154 (RSWAEGVVLG…KAHPLGSDAR (116 aa)) is the tRNA-binding domain. The B5 domain occupies 411–506 (PLERTLKLRL…RLYGYDRFSE (96 aa)). 4 residues coordinate Mg(2+): Asp-484, Asp-490, Glu-493, and Glu-494. Residues 731 to 824 (SPFPASDRDI…LEKHFPVTLR (94 aa)) enclose the FDX-ACB domain.

It belongs to the phenylalanyl-tRNA synthetase beta subunit family. Type 1 subfamily. As to quaternary structure, tetramer of two alpha and two beta subunits. It depends on Mg(2+) as a cofactor.

The protein resides in the cytoplasm. It catalyses the reaction tRNA(Phe) + L-phenylalanine + ATP = L-phenylalanyl-tRNA(Phe) + AMP + diphosphate + H(+). This Synechococcus sp. (strain JA-3-3Ab) (Cyanobacteria bacterium Yellowstone A-Prime) protein is Phenylalanine--tRNA ligase beta subunit.